A 325-amino-acid polypeptide reads, in one-letter code: UPF0285 protein MMP0642 (325 aa).

This sequence belongs to the UPF0285 family.

The sequence is that of UPF0285 protein MMP0642 from Methanococcus maripaludis (strain DSM 14266 / JCM 13030 / NBRC 101832 / S2 / LL).